A 391-amino-acid chain; its full sequence is Oxygen-dependent coproporphyrinogen-III oxidase, chloroplastic (391 aa).

Residues 1-13 show a composition bias toward polar residues; it reads MASSLLTTPSQTL. The disordered stretch occupies residues 1–34; sequence MASSLLTTPSQTLAPNPAAARARRSSPAAAQVSF. The segment covering 14–30 has biased composition (low complexity); the sequence is APNPAAARARRSSPAAA. Residues 125–134 form an important for dimerization region; it reads VLQDGNVFEK. Serine 179 is a substrate binding site. Catalysis depends on histidine 193, which acts as the Proton donor. Substrate contacts are provided by residues 195-197 and 349-354; these read NYR and GGRIES. Residues 331-366 form an important for dimerization region; it reads YVEFNLVYDRGTTFGLKTGGRIESILVSLPLTARWE.

This sequence belongs to the aerobic coproporphyrinogen-III oxidase family. Homodimer.

It is found in the plastid. Its subcellular location is the chloroplast. The catalysed reaction is coproporphyrinogen III + O2 + 2 H(+) = protoporphyrinogen IX + 2 CO2 + 2 H2O. It participates in porphyrin-containing compound metabolism; protoporphyrin-IX biosynthesis; protoporphyrinogen-IX from coproporphyrinogen-III (O2 route): step 1/1. Functionally, involved in the heme and chlorophyll biosynthesis. Catalyzes the aerobic oxidative decarboxylation of propionate groups of rings A and B of coproporphyrinogen-III to yield the vinyl groups in protoporphyrinogen-IX. This chain is Oxygen-dependent coproporphyrinogen-III oxidase, chloroplastic (CPX), found in Hordeum vulgare (Barley).